A 166-amino-acid chain; its full sequence is Phospholipase A2 inhibitor A4/A5 (166 aa).

The N-terminal stretch at 1–19 (MRLILLSGLLLLGTFLVNG) is a signal peptide. Residues 46 to 161 (LFHAFLTVHK…CDDNLLVVCE (116 aa)) enclose the C-type lectin domain. 2 disulfide bridges follow: Cys83-Cys160 and Cys138-Cys152. A glycan (N-linked (GlcNAc...) asparagine) is linked at Asn122.

It belongs to the alpha-type phospholipase A2 inhibitor family. Homotrimer; non-covalently linked. Expressed by the liver.

Its subcellular location is the secreted. Functionally, this phospholipase A2 inhibitor binds directly phospholipase A2 in the presence or absence of calcium. The polypeptide is Phospholipase A2 inhibitor A4/A5 (Crotalus durissus terrificus (South American rattlesnake)).